The following is a 154-amino-acid chain: Interleukin-2 (154 aa).

An N-terminal signal peptide occupies residues 1–20; that stretch reads MYRMQLLSCIALSLALVTNS. An O-linked (GalNAc...) threonine glycan is attached at Thr-23. An intrachain disulfide couples Cys-78 to Cys-126.

The protein belongs to the IL-2 family.

Its subcellular location is the secreted. In terms of biological role, cytokine produced by activated CD4-positive helper T-cells and to a lesser extend activated CD8-positive T-cells and natural killer (NK) cells that plays pivotal roles in the immune response and tolerance. Binds to a receptor complex composed of either the high-affinity trimeric IL-2R (IL2RA/CD25, IL2RB/CD122 and IL2RG/CD132) or the low-affinity dimeric IL-2R (IL2RB and IL2RG). Interaction with the receptor leads to oligomerization and conformation changes in the IL-2R subunits resulting in downstream signaling starting with phosphorylation of JAK1 and JAK3. In turn, JAK1 and JAK3 phosphorylate the receptor to form a docking site leading to the phosphorylation of several substrates including STAT5. This process leads to activation of several pathways including STAT, phosphoinositide-3-kinase/PI3K and mitogen-activated protein kinase/MAPK pathways. Functions as a T-cell growth factor and can increase NK-cell cytolytic activity as well. Promotes strong proliferation of activated B-cells and subsequently immunoglobulin production. Plays a pivotal role in regulating the adaptive immune system by controlling the survival and proliferation of regulatory T-cells, which are required for the maintenance of immune tolerance. Moreover, participates in the differentiation and homeostasis of effector T-cell subsets, including Th1, Th2, Th17 as well as memory CD8-positive T-cells. The sequence is that of Interleukin-2 (IL2) from Macaca fascicularis (Crab-eating macaque).